A 208-amino-acid chain; its full sequence is MKIKVQTLDGKAGADIDLNDDVFGLDARADILHRVVAWQLEKRRGPARAARERSDVARTGKKFGRQKGGGTARHGDRRAPIFIGGGKAHGPRARTFGHSLNKKIRTLGLKMALSDKAKGGKLVVIDTLELKDAKTKALAGKLGKLDLGKRALFIDGDAVHESFAMASANLIGVDALPAIGANVYDIVRADTLVLTRAAVEKLEARCNG.

The span at 47–58 (ARAARERSDVAR) shows a compositional bias: basic and acidic residues. Positions 47–84 (ARAARERSDVARTGKKFGRQKGGGTARHGDRRAPIFIG) are disordered.

Belongs to the universal ribosomal protein uL4 family. As to quaternary structure, part of the 50S ribosomal subunit.

Its function is as follows. One of the primary rRNA binding proteins, this protein initially binds near the 5'-end of the 23S rRNA. It is important during the early stages of 50S assembly. It makes multiple contacts with different domains of the 23S rRNA in the assembled 50S subunit and ribosome. Functionally, forms part of the polypeptide exit tunnel. This is Large ribosomal subunit protein uL4 from Sphingopyxis alaskensis (strain DSM 13593 / LMG 18877 / RB2256) (Sphingomonas alaskensis).